Consider the following 158-residue polypeptide: Large ribosomal subunit protein uL30 (158 aa).

This sequence belongs to the universal ribosomal protein uL30 family. In terms of assembly, part of the 50S ribosomal subunit.

This is Large ribosomal subunit protein uL30 from Saccharolobus islandicus (strain Y.N.15.51 / Yellowstone #2) (Sulfolobus islandicus).